Consider the following 248-residue polypeptide: tRNA pseudouridine synthase A (248 aa).

Asp-52 (nucleophile) is an active-site residue. Tyr-113 provides a ligand contact to substrate.

It belongs to the tRNA pseudouridine synthase TruA family. In terms of assembly, homodimer.

It catalyses the reaction uridine(38/39/40) in tRNA = pseudouridine(38/39/40) in tRNA. Its function is as follows. Formation of pseudouridine at positions 38, 39 and 40 in the anticodon stem and loop of transfer RNAs. The sequence is that of tRNA pseudouridine synthase A from Mesorhizobium japonicum (strain LMG 29417 / CECT 9101 / MAFF 303099) (Mesorhizobium loti (strain MAFF 303099)).